The chain runs to 948 residues: Bifunctional glutamine synthetase adenylyltransferase/adenylyl-removing enzyme (948 aa).

Positions 1 to 444 (MSLPSALLPT…VFATLIGEED (444 aa)) are adenylyl removase. The interval 452 to 948 (ARHFHELWDM…VIQAWQQWLG (497 aa)) is adenylyl transferase.

Belongs to the GlnE family. It depends on Mg(2+) as a cofactor.

The catalysed reaction is [glutamine synthetase]-O(4)-(5'-adenylyl)-L-tyrosine + phosphate = [glutamine synthetase]-L-tyrosine + ADP. It catalyses the reaction [glutamine synthetase]-L-tyrosine + ATP = [glutamine synthetase]-O(4)-(5'-adenylyl)-L-tyrosine + diphosphate. Involved in the regulation of glutamine synthetase GlnA, a key enzyme in the process to assimilate ammonia. When cellular nitrogen levels are high, the C-terminal adenylyl transferase (AT) inactivates GlnA by covalent transfer of an adenylyl group from ATP to specific tyrosine residue of GlnA, thus reducing its activity. Conversely, when nitrogen levels are low, the N-terminal adenylyl removase (AR) activates GlnA by removing the adenylyl group by phosphorolysis, increasing its activity. The regulatory region of GlnE binds the signal transduction protein PII (GlnB) which indicates the nitrogen status of the cell. In Vibrio cholerae serotype O1 (strain ATCC 39315 / El Tor Inaba N16961), this protein is Bifunctional glutamine synthetase adenylyltransferase/adenylyl-removing enzyme.